We begin with the raw amino-acid sequence, 298 residues long: GTPase Era (298 aa).

The Era-type G domain maps to 3–170; that stretch reads KSGFVAILGR…IKLLTDNLEE (168 aa). Residues 11–18 are G1; the sequence is GRPNVGKS. 11 to 18 is a binding site for GTP; sequence GRPNVGKS. Residues 37–41 form a G2 region; the sequence is QTTRN. Residues 58–61 are G3; it reads DTPG. GTP-binding positions include 58 to 62 and 120 to 123; these read DTPGI and NKID. A G4 region spans residues 120–123; that stretch reads NKID. The tract at residues 149–151 is G5; the sequence is ISA. The KH type-2 domain occupies 201-279; the sequence is TQQEVPHSVA…YLETWVKVKK (79 aa).

The protein belongs to the TRAFAC class TrmE-Era-EngA-EngB-Septin-like GTPase superfamily. Era GTPase family. As to quaternary structure, monomer.

It is found in the cytoplasm. The protein localises to the cell membrane. Functionally, an essential GTPase that binds both GDP and GTP, with rapid nucleotide exchange. Plays a role in 16S rRNA processing and 30S ribosomal subunit biogenesis and possibly also in cell cycle regulation and energy metabolism. This Streptococcus pyogenes serotype M2 (strain MGAS10270) protein is GTPase Era.